The following is a 142-amino-acid chain: Hemoglobin subunit beta-C (142 aa).

The 141-residue stretch at 2-142 (PNKALITGFW…VASALAHRYH (141 aa)) folds into the Globin domain. Heme b is bound by residues histidine 59 and histidine 88.

This sequence belongs to the globin family. Heterotetramer of two alpha chains and two beta chains. As to expression, red blood cells.

Functionally, involved in oxygen transport from the lung to the various peripheral tissues. The protein is Hemoglobin subunit beta-C (HBBC) of Ovis aries (Sheep).